The following is a 287-amino-acid chain: Pyridoxal kinase PdxY (287 aa).

Substrate-binding positions include serine 10 and 45–46 (TQ). Residues aspartate 112, alanine 144, glutamate 149, lysine 182, and 209–212 (RPLV) contribute to the ATP site. Aspartate 224 contacts substrate.

The protein belongs to the pyridoxine kinase family. PdxY subfamily. In terms of assembly, homodimer. The cofactor is Mg(2+).

The enzyme catalyses pyridoxal + ATP = pyridoxal 5'-phosphate + ADP + H(+). Its pathway is cofactor metabolism; pyridoxal 5'-phosphate salvage; pyridoxal 5'-phosphate from pyridoxal: step 1/1. Functionally, pyridoxal kinase involved in the salvage pathway of pyridoxal 5'-phosphate (PLP). Catalyzes the phosphorylation of pyridoxal to PLP. This is Pyridoxal kinase PdxY from Shigella sonnei (strain Ss046).